The chain runs to 202 residues: Probable GTP-binding protein EngB (202 aa).

In terms of domain architecture, EngB-type G spans 30 to 201 (NILQIALAGR…WERIQYTIDS (172 aa)). Residues 38–45 (GRSNVGKS), 65–69 (GKTRS), 84–87 (DLPG), 151–154 (TKID), and 180–182 (VSS) contribute to the GTP site. Residues serine 45 and threonine 67 each coordinate Mg(2+).

The protein belongs to the TRAFAC class TrmE-Era-EngA-EngB-Septin-like GTPase superfamily. EngB GTPase family. Mg(2+) serves as cofactor.

Its function is as follows. Necessary for normal cell division and for the maintenance of normal septation. The protein is Probable GTP-binding protein EngB of Lawsonia intracellularis (strain PHE/MN1-00).